The primary structure comprises 1347 residues: G-protein coupled receptor-associated sorting protein 1 (1347 aa).

Disordered regions lie at residues 1–75 (MTRA…AYAK), 145–174 (ESIP…SWYR), and 188–281 (DFKW…NSRS). Residues 21-33 (ENANAAEVEPEAP) show a composition bias toward low complexity. Residues 211–226 (FRPRKSMKANNRFRHM) show a composition bias toward basic residues. Basic and acidic residues predominate over residues 263-278 (PKDKTKVWSKPKEEPN). Phosphoserine is present on Ser-295. Disordered regions lie at residues 310–344 (GEEA…AMSG), 364–396 (FSKS…QEAR), and 460–485 (QVSS…SKSM). Basic residues predominate over residues 316–325 (RSKPRARKGV). Over residues 370–396 (KKEPRTRAVPKEEVKTKARASTKQEAR) the composition is skewed to basic and acidic residues. Polar residues predominate over residues 461–484 (VSSFCLGSGKKSSMESGPKATSKS). Phosphoserine is present on residues Ser-619 and Ser-626. At Thr-860 the chain carries Phosphothreonine. Ser-862 carries the phosphoserine modification.

Belongs to the GPRASP family. Interacts with cytoplasmic tails of a variety of G-protein coupled receptors such as delta opioid receptor/OPRD1, beta-2 adrenergic receptor/ADRB2 and D4 dopamine receptor/DRD4 as well as D2 dopamine receptor/DRD2. Interacts with PER1. Interacts with BECN2; the interaction is direct. As to expression, expressed in the brain, with higher expression in the hippocampus, hypothalamus and olfactory bulb.

The protein localises to the cytoplasm. Its function is as follows. Modulates lysosomal sorting and functional down-regulation of a variety of G-protein coupled receptors. Targets receptors for degradation in lysosomes via its interaction with BECN2. The polypeptide is G-protein coupled receptor-associated sorting protein 1 (Gprasp1) (Mus musculus (Mouse)).